The primary structure comprises 548 residues: MENHDSFYKFCQLCQSLYDADDHQEKRDALERHFADFRGSAFMWRELLAPAESDAAADRELTLIFETILSIERTEQENVTRNLKCTIDGAAVPLSRESRITVPQVYEFINDLRGSGSRQERLRLIGQFAAGCTDEDLLTVFRVVSDHAHAGLSAEDVMELVEPWERFQKPVPPALAQPCRRLASVLVKHPEGALAEVKYDGERVQVHKAGSRFKFFSRTLKPVPEHKVAGCREHLTRAFPRARNFILDAEIVMVDGSGEALPFGTLGRLKQMEHADGHVCMYIFDCLRYNGVSYLNATPLDFRRRVLQDEIVPIEGRVVLSAMERTNTLSELRRFVHRTLATGAEGVVLKGRLSSYAPNKRDWFKMKKEHLCDGALVDTLDLVVLGAYYGTGRNCRKMSVFLMGCLDRESNVWTTVTKVHSGLADAALTALSKELRPLMAAPRDDLPEWFDCNESMVPHLLAADPEKMPVWEIACSEMKANIGAHTAGVTMRFPRVKRFRPDKDWSTATDLQEAEQLIRNSQENTKKTFARLATTYDGPSPNKKLKLN.

Glu-196 is a binding site for ATP. The active-site N6-AMP-lysine intermediate is Lys-198. Residues Arg-203, Arg-218, Glu-250, and Phe-284 each coordinate ATP. A divalent metal cation is bound at residue Glu-250. Glu-345 is an a divalent metal cation binding site. 2 residues coordinate ATP: Arg-361 and Lys-365. The disordered stretch occupies residues 515–548 (EQLIRNSQENTKKTFARLATTYDGPSPNKKLKLN).

It belongs to the ATP-dependent DNA ligase family. A divalent metal cation serves as cofactor.

The catalysed reaction is ATP + (deoxyribonucleotide)n-3'-hydroxyl + 5'-phospho-(deoxyribonucleotide)m = (deoxyribonucleotide)n+m + AMP + diphosphate.. In terms of biological role, able to ligate a double-stranded synthetic DNA substrate containing a single nick and inefficiently ligated a 1 nucleotide gap but did not ligate a 2 nucleotide gap. It is able to ligate short, complementary overhangs but not blunt-ended double-stranded DNA. May be implicated in DNA repair and recombination. The polypeptide is DNA ligase (LIG) (Lepidoptera (butterflies and moths)).